The chain runs to 189 residues: Peptidyl-tRNA hydrolase (189 aa).

Tyr15 contributes to the tRNA binding site. The Proton acceptor role is filled by His20. TRNA is bound by residues Phe66, Asn68, and Asn114.

It belongs to the PTH family. As to quaternary structure, monomer.

It is found in the cytoplasm. It catalyses the reaction an N-acyl-L-alpha-aminoacyl-tRNA + H2O = an N-acyl-L-amino acid + a tRNA + H(+). Its function is as follows. Hydrolyzes ribosome-free peptidyl-tRNAs (with 1 or more amino acids incorporated), which drop off the ribosome during protein synthesis, or as a result of ribosome stalling. Functionally, catalyzes the release of premature peptidyl moieties from peptidyl-tRNA molecules trapped in stalled 50S ribosomal subunits, and thus maintains levels of free tRNAs and 50S ribosomes. This Streptococcus mutans serotype c (strain ATCC 700610 / UA159) protein is Peptidyl-tRNA hydrolase.